Consider the following 80-residue polypeptide: uncharacterized protein (80 aa).

This sequence to B.cereus similar ORF in glnR 5'region.

This is an uncharacterized protein from Bacillus cereus.